A 104-amino-acid chain; its full sequence is L-rhamnose mutarotase (104 aa).

Tyr18 is a substrate binding site. Catalysis depends on His22, which acts as the Proton donor. Substrate contacts are provided by residues Tyr41 and 76 to 77 (WW).

The protein belongs to the rhamnose mutarotase family. In terms of assembly, homodimer.

The protein resides in the cytoplasm. It catalyses the reaction alpha-L-rhamnose = beta-L-rhamnose. The protein operates within carbohydrate metabolism; L-rhamnose metabolism. Involved in the anomeric conversion of L-rhamnose. The chain is L-rhamnose mutarotase from Escherichia coli O8 (strain IAI1).